The sequence spans 55 residues: Large ribosomal subunit protein bL33 (55 aa).

The protein belongs to the bacterial ribosomal protein bL33 family.

This is Large ribosomal subunit protein bL33 from Zymomonas mobilis subsp. mobilis (strain ATCC 31821 / ZM4 / CP4).